The chain runs to 127 residues: Large ribosomal subunit protein bL17 (127 aa).

This sequence belongs to the bacterial ribosomal protein bL17 family. As to quaternary structure, part of the 50S ribosomal subunit. Contacts protein L32.

This is Large ribosomal subunit protein bL17 from Vibrio vulnificus (strain CMCP6).